The sequence spans 95 residues: Hiracin-JM79 immunity factor (95 aa).

Imparts immunity to bacteriocin hiracin-JM79 to naturally sensitive host strains. In Enterococcus hirae, this protein is Hiracin-JM79 immunity factor.